The primary structure comprises 261 residues: Pimeloyl-[acyl-carrier protein] methyl ester esterase (261 aa).

One can recognise an AB hydrolase-1 domain in the interval 16-241 (LVLLHGWGLN…HAAHAPFISH (226 aa)). Residues W22, 82-83 (SL), and 143-147 (FLALQ) each bind substrate. The Nucleophile role is filled by S82. Catalysis depends on residues D207 and H235. Residue H235 participates in substrate binding.

It belongs to the AB hydrolase superfamily. Carboxylesterase BioH family. Monomer.

It localises to the cytoplasm. The catalysed reaction is 6-carboxyhexanoyl-[ACP] methyl ester + H2O = 6-carboxyhexanoyl-[ACP] + methanol + H(+). Its pathway is cofactor biosynthesis; biotin biosynthesis. In terms of biological role, the physiological role of BioH is to remove the methyl group introduced by BioC when the pimeloyl moiety is complete. It allows to synthesize pimeloyl-ACP via the fatty acid synthetic pathway through the hydrolysis of the ester bonds of pimeloyl-ACP esters. The sequence is that of Pimeloyl-[acyl-carrier protein] methyl ester esterase from Photorhabdus laumondii subsp. laumondii (strain DSM 15139 / CIP 105565 / TT01) (Photorhabdus luminescens subsp. laumondii).